The following is a 179-amino-acid chain: uncharacterized protein (179 aa).

Residues 1–27 (MKTISKQLSAVIFPFIFSACVSQSASS) constitute a signal peptide (or 24).

This is an uncharacterized protein from Haemophilus influenzae (strain ATCC 51907 / DSM 11121 / KW20 / Rd).